A 118-amino-acid polypeptide reads, in one-letter code: MITKPDKNKTRQKRHIRVRNKISGTAERPRLNVFRSNKNIYAQVIDDVAGVTLVSASTLDSEVAGDNKTDQAKGVGELIAKRAIEKKITNVVFDRGGYLYHGRVQALAEAAREAGLKF.

It belongs to the universal ribosomal protein uL18 family. Part of the 50S ribosomal subunit; part of the 5S rRNA/L5/L18/L25 subcomplex. Contacts the 5S and 23S rRNAs.

In terms of biological role, this is one of the proteins that bind and probably mediate the attachment of the 5S RNA into the large ribosomal subunit, where it forms part of the central protuberance. This is Large ribosomal subunit protein uL18 from Levilactobacillus brevis (strain ATCC 367 / BCRC 12310 / CIP 105137 / JCM 1170 / LMG 11437 / NCIMB 947 / NCTC 947) (Lactobacillus brevis).